We begin with the raw amino-acid sequence, 329 residues long: Putative GTPase Obg (329 aa).

The Obg domain maps to 1–159 (MQFIDQARIM…WPLQLELKLL (159 aa)). In terms of domain architecture, OBG-type G spans 160–328 (AEVGIIGLPN…LKTQIWQQLG (169 aa)). GTP-binding positions include 166 to 173 (GLPNAGKS), 191 to 195 (FTTLI), 213 to 216 (DIPG), 280 to 283 (SKIE), and 309 to 311 (SSA). Ser173 and Thr193 together coordinate Mg(2+).

The protein belongs to the TRAFAC class OBG-HflX-like GTPase superfamily. OBG GTPase family. As to quaternary structure, monomer. Requires Mg(2+) as cofactor.

The protein localises to the plastid. Its subcellular location is the organellar chromatophore. Functionally, an essential GTPase which binds GTP, GDP and possibly (p)ppGpp with moderate affinity, with high nucleotide exchange rates and a fairly low GTP hydrolysis rate. The polypeptide is Putative GTPase Obg (Paulinella chromatophora).